The sequence spans 274 residues: NH(3)-dependent NAD(+) synthetase (274 aa).

Residue 46-53 coordinates ATP; sequence GISGGQDS. Aspartate 52 is a binding site for Mg(2+). Deamido-NAD(+) is bound at residue arginine 140. Threonine 160 is a binding site for ATP. Glutamate 165 serves as a coordination point for Mg(2+). The deamido-NAD(+) site is built by lysine 173 and aspartate 180. Residues lysine 189 and threonine 211 each coordinate ATP. 260-261 lines the deamido-NAD(+) pocket; that stretch reads HK.

The protein belongs to the NAD synthetase family. In terms of assembly, homodimer.

The enzyme catalyses deamido-NAD(+) + NH4(+) + ATP = AMP + diphosphate + NAD(+) + H(+). It functions in the pathway cofactor biosynthesis; NAD(+) biosynthesis; NAD(+) from deamido-NAD(+) (ammonia route): step 1/1. Catalyzes the ATP-dependent amidation of deamido-NAD to form NAD. Uses ammonia as a nitrogen source. This chain is NH(3)-dependent NAD(+) synthetase, found in Streptococcus mutans serotype c (strain ATCC 700610 / UA159).